Reading from the N-terminus, the 269-residue chain is Tryptophan synthase alpha chain (269 aa).

Active-site proton acceptor residues include Glu-50 and Asp-61.

This sequence belongs to the TrpA family. Tetramer of two alpha and two beta chains.

It catalyses the reaction (1S,2R)-1-C-(indol-3-yl)glycerol 3-phosphate + L-serine = D-glyceraldehyde 3-phosphate + L-tryptophan + H2O. The protein operates within amino-acid biosynthesis; L-tryptophan biosynthesis; L-tryptophan from chorismate: step 5/5. In terms of biological role, the alpha subunit is responsible for the aldol cleavage of indoleglycerol phosphate to indole and glyceraldehyde 3-phosphate. The chain is Tryptophan synthase alpha chain from Francisella tularensis subsp. tularensis (strain WY96-3418).